A 151-amino-acid polypeptide reads, in one-letter code: Arginine repressor (151 aa).

This sequence belongs to the ArgR family.

The protein resides in the cytoplasm. It functions in the pathway amino-acid biosynthesis; L-arginine biosynthesis [regulation]. In terms of biological role, regulates arginine biosynthesis genes. The protein is Arginine repressor of Moorella thermoacetica (strain ATCC 39073 / JCM 9320).